The following is a 321-amino-acid chain: Protein-L-isoaspartate O-methyltransferase (321 aa).

The span at 21-31 shows a compositional bias: basic and acidic residues; the sequence is KPAERQREKRI. Positions 21 to 65 are disordered; the sequence is KPAERQREKRISSGVNAVSLPTPARTASAERASSTPAPGPGPQRV. Residues 41–56 show a composition bias toward low complexity; that stretch reads PTPARTASAERASSTP. Ser-153 is an active-site residue.

This sequence belongs to the methyltransferase superfamily. L-isoaspartyl/D-aspartyl protein methyltransferase family.

It localises to the cytoplasm. The enzyme catalyses [protein]-L-isoaspartate + S-adenosyl-L-methionine = [protein]-L-isoaspartate alpha-methyl ester + S-adenosyl-L-homocysteine. Its function is as follows. Catalyzes the methyl esterification of L-isoaspartyl residues in peptides and proteins that result from spontaneous decomposition of normal L-aspartyl and L-asparaginyl residues. It plays a role in the repair and/or degradation of damaged proteins. This chain is Protein-L-isoaspartate O-methyltransferase, found in Ralstonia nicotianae (strain ATCC BAA-1114 / GMI1000) (Ralstonia solanacearum).